Reading from the N-terminus, the 215-residue chain is uncharacterized protein (215 aa).

Residues G53, E74, and D97 each contribute to the S-adenosyl-L-methionine site.

This sequence belongs to the methyltransferase superfamily. YrrT family.

Could be a S-adenosyl-L-methionine-dependent methyltransferase. This is an uncharacterized protein from Geobacillus thermodenitrificans (strain NG80-2).